We begin with the raw amino-acid sequence, 691 residues long: DNA ligase (691 aa).

Residues 41–45, 90–91, and E130 each bind NAD(+); these read DAEYD and SL. K132 serves as the catalytic N6-AMP-lysine intermediate. Residues R153, E190, K307, and K331 each contribute to the NAD(+) site. 4 residues coordinate Zn(2+): C425, C428, C443, and C449. A BRCT domain is found at 610–691; that stretch reads APQGVLAGKT…LHQLLEGNTQ (82 aa).

It belongs to the NAD-dependent DNA ligase family. LigA subfamily. Mg(2+) is required as a cofactor. It depends on Mn(2+) as a cofactor.

The catalysed reaction is NAD(+) + (deoxyribonucleotide)n-3'-hydroxyl + 5'-phospho-(deoxyribonucleotide)m = (deoxyribonucleotide)n+m + AMP + beta-nicotinamide D-nucleotide.. Its function is as follows. DNA ligase that catalyzes the formation of phosphodiester linkages between 5'-phosphoryl and 3'-hydroxyl groups in double-stranded DNA using NAD as a coenzyme and as the energy source for the reaction. It is essential for DNA replication and repair of damaged DNA. In Burkholderia vietnamiensis (strain G4 / LMG 22486) (Burkholderia cepacia (strain R1808)), this protein is DNA ligase.